A 129-amino-acid chain; its full sequence is Large ribosomal subunit protein bL12c (129 aa).

This sequence belongs to the bacterial ribosomal protein bL12 family. In terms of assembly, homodimer. Part of the ribosomal stalk of the 50S ribosomal subunit. Forms a multimeric L10(L12)X complex, where L10 forms an elongated spine to which 2 to 4 L12 dimers bind in a sequential fashion. Binds GTP-bound translation factors.

The protein localises to the plastid. It localises to the chloroplast. Functionally, forms part of the ribosomal stalk which helps the ribosome interact with GTP-bound translation factors. Is thus essential for accurate translation. In Tupiella akineta (Green alga), this protein is Large ribosomal subunit protein bL12c.